Consider the following 188-residue polypeptide: Ribosome-recycling factor (188 aa).

Belongs to the RRF family.

The protein resides in the cytoplasm. Responsible for the release of ribosomes from messenger RNA at the termination of protein biosynthesis. May increase the efficiency of translation by recycling ribosomes from one round of translation to another. The sequence is that of Ribosome-recycling factor from Anaeromyxobacter sp. (strain K).